The primary structure comprises 356 residues: UDP-N-acetylglucosamine--N-acetylmuramyl-(pentapeptide) pyrophosphoryl-undecaprenol N-acetylglucosamine transferase (356 aa).

Residues 12–14, arginine 166, serine 196, and glutamine 291 each bind UDP-N-acetyl-alpha-D-glucosamine; that span reads TAG.

Belongs to the glycosyltransferase 28 family. MurG subfamily.

Its subcellular location is the cell membrane. It carries out the reaction di-trans,octa-cis-undecaprenyl diphospho-N-acetyl-alpha-D-muramoyl-L-alanyl-D-glutamyl-meso-2,6-diaminopimeloyl-D-alanyl-D-alanine + UDP-N-acetyl-alpha-D-glucosamine = di-trans,octa-cis-undecaprenyl diphospho-[N-acetyl-alpha-D-glucosaminyl-(1-&gt;4)]-N-acetyl-alpha-D-muramoyl-L-alanyl-D-glutamyl-meso-2,6-diaminopimeloyl-D-alanyl-D-alanine + UDP + H(+). It functions in the pathway cell wall biogenesis; peptidoglycan biosynthesis. Its function is as follows. Cell wall formation. Catalyzes the transfer of a GlcNAc subunit on undecaprenyl-pyrophosphoryl-MurNAc-pentapeptide (lipid intermediate I) to form undecaprenyl-pyrophosphoryl-MurNAc-(pentapeptide)GlcNAc (lipid intermediate II). The protein is UDP-N-acetylglucosamine--N-acetylmuramyl-(pentapeptide) pyrophosphoryl-undecaprenol N-acetylglucosamine transferase of Geobacillus thermodenitrificans (strain NG80-2).